Here is an 84-residue protein sequence, read N- to C-terminus: Acetylcholine receptor subunit alpha (84 aa).

Cystine bridges form between C7–C21 and C71–C72. Residue N20 is glycosylated (N-linked (GlcNAc...) asparagine).

This sequence belongs to the ligand-gated ion channel (TC 1.A.9) family. Acetylcholine receptor (TC 1.A.9.1) subfamily. Alpha-1/CHRNA1 sub-subfamily. In terms of assembly, one of the alpha chains that assemble within the acetylcholine receptor, a pentamer of two alpha chains, a beta, a delta, and a gamma (in immature muscle) or epsilon (in mature muscle) chains. The muscle heteropentamer composed of alpha-1, beta-1, delta, epsilon subunits interacts with the alpha-conotoxin ImII.

The protein localises to the postsynaptic cell membrane. The protein resides in the cell membrane. It carries out the reaction K(+)(in) = K(+)(out). It catalyses the reaction Na(+)(in) = Na(+)(out). Upon acetylcholine binding, the AChR responds by an extensive change in conformation that affects all subunits and leads to opening of an ion-conducting channel across the plasma membrane. This chain is Acetylcholine receptor subunit alpha (CHRNA1), found in Crocidura russula (Greater white-toothed shrew).